A 480-amino-acid chain; its full sequence is UDP-glycosyltransferase 72B1 (480 aa).

Catalysis depends on His-19, which acts as the Proton acceptor. Residue Asp-117 is the Charge relay of the active site. Positions 277, 346, 347, and 364 each coordinate UDP. UDP-alpha-D-glucose contacts are provided by Ser-277, Trp-346, Ala-347, His-364, Trp-367, Asn-368, Ser-369, Glu-372, Tyr-386, Glu-388, and Gln-389. Asn-368, Ser-369, Glu-372, and Tyr-386 together coordinate UDP.

It belongs to the UDP-glycosyltransferase family.

The catalysed reaction is hydroquinone + UDP-alpha-D-glucose = hydroquinone O-beta-D-glucopyranoside + UDP + H(+). Functionally, bifunctional O-glycosyltransferase and N-glycosyltransferase that can detoxify xenobiotics. Possesses high activity to metabolize the persistent pollutants 2,4,5-trichlorophenol (TCP) and 3,4-dichloroaniline (DCA). Also active on benzoates and benzoate derivatives in vitro. This is UDP-glycosyltransferase 72B1 (UGT72B1) from Arabidopsis thaliana (Mouse-ear cress).